A 207-amino-acid polypeptide reads, in one-letter code: MMNDFELSLKSLGVSFTSKSIDKLRFYIEKVLLFGTRFNLVSNNDRNFDAVLLHVLDSVAGLPIIKDKNPRQVLDVGSGAGFPGIVLALFDNFRKYILLERSNKKATFLRMISLELGLDNIEVLERDVDKEQNKYEFITIRAFRDIREYARILKLILKDGGLIVAYKGKLNKIKFEVSHIESLFNKIEIKSSTMNDGKERNFLLLYK.

S-adenosyl-L-methionine contacts are provided by residues glycine 77, phenylalanine 82, 100-102 (ERS), and arginine 141.

The protein belongs to the methyltransferase superfamily. RNA methyltransferase RsmG family.

It is found in the cytoplasm. Its function is as follows. Specifically methylates the N7 position of a guanine in 16S rRNA. This chain is Ribosomal RNA small subunit methyltransferase G, found in Borrelia turicatae (strain 91E135).